Reading from the N-terminus, the 271-residue chain is uncharacterized protein (271 aa).

The interval 1–20 (MPDLHTLPAGSRPERAIRNN) is disordered.

The protein belongs to the PEP2 family.

This is an uncharacterized protein from Aspergillus terreus (strain NIH 2624 / FGSC A1156).